The following is a 140-amino-acid chain: Large ribosomal subunit protein uL14 (140 aa).

This sequence belongs to the universal ribosomal protein uL14 family.

This Nicotiana tabacum (Common tobacco) protein is Large ribosomal subunit protein uL14 (RPL23).